The following is a 275-amino-acid chain: Large ribosomal subunit protein uL2c (275 aa).

The tract at residues 225-252 is disordered; sequence MNPCDHPHGGGEGRSPIGRAKPVTPWGK.

This sequence belongs to the universal ribosomal protein uL2 family. In terms of assembly, part of the 50S ribosomal subunit.

The protein localises to the plastid. It localises to the chloroplast. The polypeptide is Large ribosomal subunit protein uL2c (rpl2) (Guillardia theta (Cryptophyte)).